Here is a 711-residue protein sequence, read N- to C-terminus: Ribosomal RNA large subunit methyltransferase K/L (711 aa).

Positions 43–154 (LAYRITLWTR…NGVITIAMNF (112 aa)) constitute a THUMP domain.

It belongs to the methyltransferase superfamily. RlmKL family.

It is found in the cytoplasm. The enzyme catalyses guanosine(2445) in 23S rRNA + S-adenosyl-L-methionine = N(2)-methylguanosine(2445) in 23S rRNA + S-adenosyl-L-homocysteine + H(+). It carries out the reaction guanosine(2069) in 23S rRNA + S-adenosyl-L-methionine = N(2)-methylguanosine(2069) in 23S rRNA + S-adenosyl-L-homocysteine + H(+). Specifically methylates the guanine in position 2445 (m2G2445) and the guanine in position 2069 (m7G2069) of 23S rRNA. The chain is Ribosomal RNA large subunit methyltransferase K/L from Shewanella oneidensis (strain ATCC 700550 / JCM 31522 / CIP 106686 / LMG 19005 / NCIMB 14063 / MR-1).